The sequence spans 105 residues: Large ribosomal subunit protein uL24 (105 aa).

Belongs to the universal ribosomal protein uL24 family. Part of the 50S ribosomal subunit.

In terms of biological role, one of two assembly initiator proteins, it binds directly to the 5'-end of the 23S rRNA, where it nucleates assembly of the 50S subunit. Functionally, one of the proteins that surrounds the polypeptide exit tunnel on the outside of the subunit. In Thermotoga petrophila (strain ATCC BAA-488 / DSM 13995 / JCM 10881 / RKU-1), this protein is Large ribosomal subunit protein uL24.